The primary structure comprises 775 residues: MVYAHNLGFPRIGIKREMKKTVEAYWRGEISQQQLQQQAIELQLTNWKIQAEAGVDLIPVGDFSWYDHVLDMAVRVGAIPSRFKALNSNITDTMFCTARGQAPNGIETSACEMTKWFDTNYHYIVPEFTTNQSFELHHDDLFKSTKLALENNYRAKPVILGPLSFLWLGKCKGESFNKLLLLEKLLPVYAEIFEQLSSLGVEWVQVDEPILVLDLPPEWQQAFLTTYQQLNFFNLKCLLATYFGSLDDNLSLTCQLPVDGLHIDYCRAPDQLDSVLSQLPAEKILSVGIVDGRNIWCNDLNRSLTLLENIQSSLGDRLWVAPSCSLLHVPIDLDQENKLDVELKSWFAFAKQKVAEAAFLTRGLREGRESIGAELKKNEEVIISRKTSKRIHNPNVEKKAASVNERLMRRQHEHSIRKNKQTAQLNLPLFPTTTIGSFPQTSKIRCLRRDYKQGKIDDALYEEKIRQEIAEVIGIQVKLGLDVLVHGEPERNDMVEYFGELLDGIAITSNGWVQSYGSRCVKPPIIFGDVSRERPMTLRWIEYAQSLTTKSVKGMLTGPVTILAWSFVRDDQPRSQTAKQIALALRDEVQDLERSGVRVIQIDEPAFRECLPLRKAAWQDYLEWAVKCFRLASCGVKDETQIHTHMCYSEFNDIIEAIAALDADVITIESSRSEMEILKSFEKFAYPNDIGPGIYDIHSPRIPRVAEIEELAVRALQYIPIERLWINPDCGLKTRNWEETKEALSRMVDAAKHLRKAFSSEKTPTIDLELQPAST.

Residues Arg16–Lys19 and Lys115 each bind 5-methyltetrahydropteroyltri-L-glutamate. Residues Ile435–Ser437 and Glu488 each bind L-homocysteine. L-methionine-binding positions include Ile435–Ser437 and Glu488. 5-methyltetrahydropteroyltri-L-glutamate-binding positions include Arg519–Cys520 and Trp565. Residue Asp603 participates in L-homocysteine binding. Asp603 provides a ligand contact to L-methionine. Glu609 is a binding site for 5-methyltetrahydropteroyltri-L-glutamate. 3 residues coordinate Zn(2+): His645, Cys647, and Glu669. Residue His698 is the Proton donor of the active site. Cys730 contributes to the Zn(2+) binding site.

Belongs to the vitamin-B12 independent methionine synthase family. The cofactor is Zn(2+).

It carries out the reaction 5-methyltetrahydropteroyltri-L-glutamate + L-homocysteine = tetrahydropteroyltri-L-glutamate + L-methionine. It functions in the pathway amino-acid biosynthesis; L-methionine biosynthesis via de novo pathway; L-methionine from L-homocysteine (MetE route): step 1/1. In terms of biological role, catalyzes the transfer of a methyl group from 5-methyltetrahydrofolate to homocysteine resulting in methionine formation. In Coxiella burnetii (strain CbuG_Q212) (Coxiella burnetii (strain Q212)), this protein is 5-methyltetrahydropteroyltriglutamate--homocysteine methyltransferase.